The sequence spans 413 residues: MSTEPSSKPVFPITDEVRHALAVTKRGVDELLVEEEFAQKLARSAATGTPLRIKLGLDPTAPDIHIGHTVVLNKMRQLQDLGHTVIFLIGDFTSLIGDPSGRNATRPPLTREQIESNAKTYFEQAALVLDRDKTEIRYNSEWSMPLGADGMIKLASRYTVARILEREDFTKRFQGGVPISIHEFLYPLMQGYDSVALNADLELGGTDQKFNLLVGRELQKQYGQEQQCILTMPLLEGLDGVEKMSKSKGNYVGISEQPTDMFGKLMSISDTLMWRYFELLSFRPMDEIGGFKREIEGGRNPRDFKVLLAQEIVARFHSQADAERALEDFNHRAKGGVPDDIPSVTLAGAPLAIGQLLKQAGLVPSTSEALRNIEQGGVKIDGATVSDKGLKVEAGEFVVQVGKRRFARVTLTA.

Residues 59-68 carry the 'HIGH' region motif; that stretch reads PTAPDIHIGH. Residues 243–247 carry the 'KMSKS' region motif; that stretch reads KMSKS. K246 serves as a coordination point for ATP. An S4 RNA-binding domain is found at 351–411; that stretch reads LAIGQLLKQA…GKRRFARVTL (61 aa).

This sequence belongs to the class-I aminoacyl-tRNA synthetase family. TyrS type 2 subfamily. As to quaternary structure, homodimer.

The protein localises to the cytoplasm. The catalysed reaction is tRNA(Tyr) + L-tyrosine + ATP = L-tyrosyl-tRNA(Tyr) + AMP + diphosphate + H(+). In terms of biological role, catalyzes the attachment of tyrosine to tRNA(Tyr) in a two-step reaction: tyrosine is first activated by ATP to form Tyr-AMP and then transferred to the acceptor end of tRNA(Tyr). The polypeptide is Tyrosine--tRNA ligase (Burkholderia lata (strain ATCC 17760 / DSM 23089 / LMG 22485 / NCIMB 9086 / R18194 / 383)).